Here is a 114-residue protein sequence, read N- to C-terminus: Large ribosomal subunit protein bL19 (114 aa).

The protein belongs to the bacterial ribosomal protein bL19 family.

This protein is located at the 30S-50S ribosomal subunit interface and may play a role in the structure and function of the aminoacyl-tRNA binding site. The polypeptide is Large ribosomal subunit protein bL19 (Clostridium botulinum (strain ATCC 19397 / Type A)).